The following is a 286-amino-acid chain: Serine carboxypeptidase-like (286 aa).

Residue S4 is part of the active site. Cystine bridges form between C83/C98 and C121/C126. D193 is an active-site residue. C196 serves as a coordination point for substrate. An N-linked (GlcNAc...) asparagine glycan is attached at N227. Residue H250 is part of the active site.

It belongs to the peptidase S10 family.

In terms of biological role, involved in degradation of small peptides. In Pisum sativum (Garden pea), this protein is Serine carboxypeptidase-like.